A 750-amino-acid chain; its full sequence is Photosystem I P700 chlorophyll a apoprotein A1 (750 aa).

The next 8 helical transmembrane spans lie at 70–93 (VFSA…FHGA), 156–179 (LYCT…FHYH), 195–219 (LNHH…HVSL), 291–309 (IAHH…GHMY), 346–369 (WHAQ…HHMY), 385–411 (LSLF…IFMV), 433–455 (AIIS…LYIH), and 531–549 (FLVH…LILL). [4Fe-4S] cluster-binding residues include cysteine 573 and cysteine 582. Helical transmembrane passes span 589-610 (HVFL…HFSW) and 664-686 (LSAY…MFLF). Histidine 675 contributes to the chlorophyll a' binding site. Positions 683 and 691 each coordinate chlorophyll a. Tryptophan 692 lines the phylloquinone pocket. The helical transmembrane segment at 724-744 (AVGVTHYLLGGIATTWAFFLA) threads the bilayer.

The protein belongs to the PsaA/PsaB family. The PsaA/B heterodimer binds the P700 chlorophyll special pair and subsequent electron acceptors. PSI consists of a core antenna complex that captures photons, and an electron transfer chain that converts photonic excitation into a charge separation. The eukaryotic PSI reaction center is composed of at least 11 subunits. The cofactor is P700 is a chlorophyll a/chlorophyll a' dimer, A0 is one or more chlorophyll a, A1 is one or both phylloquinones and FX is a shared 4Fe-4S iron-sulfur center..

It is found in the plastid. It localises to the chloroplast thylakoid membrane. The enzyme catalyses reduced [plastocyanin] + hnu + oxidized [2Fe-2S]-[ferredoxin] = oxidized [plastocyanin] + reduced [2Fe-2S]-[ferredoxin]. PsaA and PsaB bind P700, the primary electron donor of photosystem I (PSI), as well as the electron acceptors A0, A1 and FX. PSI is a plastocyanin-ferredoxin oxidoreductase, converting photonic excitation into a charge separation, which transfers an electron from the donor P700 chlorophyll pair to the spectroscopically characterized acceptors A0, A1, FX, FA and FB in turn. Oxidized P700 is reduced on the lumenal side of the thylakoid membrane by plastocyanin. The sequence is that of Photosystem I P700 chlorophyll a apoprotein A1 from Arabidopsis thaliana (Mouse-ear cress).